The sequence spans 330 residues: Peptide transport system ATP-binding protein SapD (330 aa).

In terms of domain architecture, ABC transporter spans 6–259; the sequence is IRNLTIEFKT…PHHPYTQALI (254 aa). ATP is bound at residue 40 to 47; the sequence is GESGSGKS.

Belongs to the ABC transporter superfamily.

Its subcellular location is the cell inner membrane. Its function is as follows. Involved in a peptide intake transport system that plays a role in the resistance to antimicrobial peptides. This is Peptide transport system ATP-binding protein SapD (sapD) from Escherichia coli O157:H7.